We begin with the raw amino-acid sequence, 204 residues long: General stress protein Ctc (204 aa).

The tract at residues 177–204 is disordered; it reads ILPPQQQEAAEVDEEESADAQPEGENEQ. The segment covering 186-204 has biased composition (acidic residues); it reads AEVDEEESADAQPEGENEQ.

This sequence belongs to the bacterial ribosomal protein bL25 family. CTC subfamily. As to quaternary structure, part of the ribosome (presumably the 50S subunit) under heat-stress but not control growth conditions. Binds 5S rRNA.

Its function is as follows. Not required for exponential growth; probably functions in vegetatively growing cells, maybe required for accurate translation under stress conditions. The polypeptide is General stress protein Ctc (Bacillus subtilis (strain 168)).